The following is a 518-amino-acid chain: Chaperonin GroEL (518 aa).

ATP-binding positions include 30-33, Lys-51, 87-91, and Gly-415; these read TLGP and DGTTT.

It belongs to the chaperonin (HSP60) family. In terms of assembly, forms a cylinder of 14 subunits composed of two heptameric rings stacked back-to-back. Interacts with the co-chaperonin GroES.

The protein resides in the cytoplasm. It catalyses the reaction ATP + H2O + a folded polypeptide = ADP + phosphate + an unfolded polypeptide.. Its function is as follows. Together with its co-chaperonin GroES, plays an essential role in assisting protein folding. The GroEL-GroES system forms a nano-cage that allows encapsulation of the non-native substrate proteins and provides a physical environment optimized to promote and accelerate protein folding. The protein is Chaperonin GroEL of Desulfotalea psychrophila (strain LSv54 / DSM 12343).